We begin with the raw amino-acid sequence, 193 residues long: Holliday junction branch migration complex subunit RuvA (193 aa).

Residues 1–64 (MIGRIAGTLL…EDAHLLFGFA (64 aa)) are domain I. Positions 65-144 (TATERNTFRE…DLGHAPGATP (80 aa)) are domain II. The segment at 145 to 151 (LADSAVD) is flexible linker. The interval 151–193 (DILNALLALGYSEKEAAQAIKQVPAGTGVSDGIKLALKALSKG) is domain III.

It belongs to the RuvA family. Homotetramer. Forms an RuvA(8)-RuvB(12)-Holliday junction (HJ) complex. HJ DNA is sandwiched between 2 RuvA tetramers; dsDNA enters through RuvA and exits via RuvB. An RuvB hexamer assembles on each DNA strand where it exits the tetramer. Each RuvB hexamer is contacted by two RuvA subunits (via domain III) on 2 adjacent RuvB subunits; this complex drives branch migration. In the full resolvosome a probable DNA-RuvA(4)-RuvB(12)-RuvC(2) complex forms which resolves the HJ.

It localises to the cytoplasm. In terms of biological role, the RuvA-RuvB-RuvC complex processes Holliday junction (HJ) DNA during genetic recombination and DNA repair, while the RuvA-RuvB complex plays an important role in the rescue of blocked DNA replication forks via replication fork reversal (RFR). RuvA specifically binds to HJ cruciform DNA, conferring on it an open structure. The RuvB hexamer acts as an ATP-dependent pump, pulling dsDNA into and through the RuvAB complex. HJ branch migration allows RuvC to scan DNA until it finds its consensus sequence, where it cleaves and resolves the cruciform DNA. The protein is Holliday junction branch migration complex subunit RuvA of Cupriavidus metallidurans (strain ATCC 43123 / DSM 2839 / NBRC 102507 / CH34) (Ralstonia metallidurans).